Reading from the N-terminus, the 45-residue chain is Large ribosomal subunit protein bL34 (45 aa).

The tract at residues 1–45 is disordered; sequence MTKRTFGGTSRKRKRVSGFRVRMRSHTGRRVIKSRRQKGRERIAV. Positions 10–39 are enriched in basic residues; the sequence is SRKRKRVSGFRVRMRSHTGRRVIKSRRQKG.

Belongs to the bacterial ribosomal protein bL34 family.

The sequence is that of Large ribosomal subunit protein bL34 from Prochlorococcus marinus (strain MIT 9301).